A 494-amino-acid chain; its full sequence is Cytochrome P450 2A5 (494 aa).

Position 131 is a phosphoserine (S131). The residue at position 379 (K379) is an N6-acetyllysine. Residue C439 participates in heme binding.

The protein belongs to the cytochrome P450 family. It depends on heme as a cofactor. In terms of tissue distribution, liver, with a strong circadian rhythmicity. Circadian expression is regulated by DBP.

It is found in the endoplasmic reticulum membrane. The protein localises to the microsome membrane. The enzyme catalyses an organic molecule + reduced [NADPH--hemoprotein reductase] + O2 = an alcohol + oxidized [NADPH--hemoprotein reductase] + H2O + H(+). In terms of biological role, exhibits a high coumarin 7-hydroxylase activity. This chain is Cytochrome P450 2A5 (Cyp2a5), found in Mus musculus (Mouse).